A 136-amino-acid chain; its full sequence is uncharacterized protein (136 aa).

A helical membrane pass occupies residues 14 to 34 (ASVFAFFVLFLFCLKIILVLF).

It localises to the membrane. This is an uncharacterized protein from Mycoplasma genitalium (strain ATCC 33530 / DSM 19775 / NCTC 10195 / G37) (Mycoplasmoides genitalium).